The chain runs to 319 residues: MTATVSTTDTPLNASRASGPGFARKAKAYLALTKPRVIELLLVSTLPTMIYAERGFPSIGLILATLVGGAFAAGSAGAFNCYIDRDIDKLMARTENRPLVTGEVTPREALVFSWLLGAAAIAILWFGANPLSAWLGLGAIFFYVVIYTIILKRRTAQNIVWGGAAGCFPVLIAWAAVTNSVEWPAIILFMVIFLWTPPHYWPLSMRYGEDYRNAKVPMLGAIAGAKVVSVQVVLYAWAMVACSLLMVPAGGAGWVYTVTAVLAGAWFLYESHALYNRAQREDIPDKRAMKVFHGSISYLTLLFIALAVDPFVGPAVIGG.

8 helical membrane-spanning segments follow: residues isoleucine 59–phenylalanine 79, glutamate 108–alanine 128, leucine 131–leucine 151, asparagine 158–threonine 178, tryptophan 183–leucine 203, valine 232–alanine 252, tryptophan 254–leucine 274, and leucine 299–glycine 319.

The protein belongs to the UbiA prenyltransferase family. Protoheme IX farnesyltransferase subfamily.

It localises to the cell membrane. The catalysed reaction is heme b + (2E,6E)-farnesyl diphosphate + H2O = Fe(II)-heme o + diphosphate. The protein operates within porphyrin-containing compound metabolism; heme O biosynthesis; heme O from protoheme: step 1/1. In terms of biological role, converts heme B (protoheme IX) to heme O by substitution of the vinyl group on carbon 2 of heme B porphyrin ring with a hydroxyethyl farnesyl side group. This is Protoheme IX farnesyltransferase from Pseudarthrobacter chlorophenolicus (strain ATCC 700700 / DSM 12829 / CIP 107037 / JCM 12360 / KCTC 9906 / NCIMB 13794 / A6) (Arthrobacter chlorophenolicus).